Consider the following 522-residue polypeptide: Leucine-rich repeat transmembrane neuronal protein 1 (522 aa).

Positions 1-34 are cleaved as a signal peptide; sequence MDFLLLGLCLYWLLRRPSGVVLCLLGACFQMLPA. The LRRNT domain occupies 35–63; the sequence is APSGCPQLCRCEGRLLYCEALNLTEAPHN. Residues 35 to 427 lie on the Extracellular side of the membrane; it reads APSGCPQLCR…HAENAVQIHK (393 aa). N-linked (GlcNAc...) asparagine glycans are attached at residues Asn56 and Asn63. LRR repeat units follow at residues 64 to 87, 89 to 111, 112 to 135, 137 to 159, 161 to 183, 184 to 207, 209 to 231, 233 to 255, 256 to 278, and 279 to 302; these read LSGL…QFTG, MQLT…AFQK, LRRV…TFRP, PNLR…LFHG, RKLT…IFQD, CRSL…SFAG, FKLT…HFPR, ISLH…LDWV, WNLE…VFET, and VPHL…ILNS. N-linked (GlcNAc...) asparagine glycosylation is present at Asn130. The LRRCT domain occupies 314 to 365; it reads NLWDCGRNVCALASWLNNFQGRYDGNLQCASPEYAQGEDVLDAVYAFHLCED. A glycan (N-linked (GlcNAc...) asparagine) is linked at Asn380. The tract at residues 382-401 is disordered; the sequence is SDLGPPASSATTLADGGEGQ. Residues 428 to 448 traverse the membrane as a helical segment; sequence VVTGTMALIFSFLIVVLVLYV. The Cytoplasmic portion of the chain corresponds to 449 to 522; that stretch reads SWKCFPASLR…HQQPARECEV (74 aa).

This sequence belongs to the LRRTM family. In terms of tissue distribution, predominantly expressed in forebrain regions including thalamus and cerebral cortex.

It localises to the cell membrane. Its subcellular location is the postsynaptic cell membrane. Functionally, exhibits strong synaptogenic activity, restricted to excitatory presynaptic differentiation, acting at both pre- and postsynaptic level. The protein is Leucine-rich repeat transmembrane neuronal protein 1 (LRRTM1) of Homo sapiens (Human).